The chain runs to 180 residues: ATP-dependent protease subunit HslV (180 aa).

Residue Thr8 is part of the active site. Ala165, Cys168, and Thr171 together coordinate Na(+).

It belongs to the peptidase T1B family. HslV subfamily. A double ring-shaped homohexamer of HslV is capped on each side by a ring-shaped HslU homohexamer. The assembly of the HslU/HslV complex is dependent on binding of ATP.

The protein resides in the cytoplasm. It carries out the reaction ATP-dependent cleavage of peptide bonds with broad specificity.. With respect to regulation, allosterically activated by HslU binding. In terms of biological role, protease subunit of a proteasome-like degradation complex believed to be a general protein degrading machinery. The polypeptide is ATP-dependent protease subunit HslV (Staphylococcus epidermidis (strain ATCC 12228 / FDA PCI 1200)).